The following is a 462-amino-acid chain: Trigger factor (462 aa).

Residues 161 to 246 form the PPIase FKBP-type domain; the sequence is GDVVVIDFVG…VKEVRAPKAA (86 aa). Basic and acidic residues predominate over residues 428–437; that stretch reads SVEDLRKDPD. The interval 428–462 is disordered; it reads SVEDLRKDPDEASADGEAAPAKPKKKAAAKKKAAE. Residues 449–462 show a composition bias toward basic residues; that stretch reads KPKKKAAAKKKAAE.

Belongs to the FKBP-type PPIase family. Tig subfamily.

It localises to the cytoplasm. The catalysed reaction is [protein]-peptidylproline (omega=180) = [protein]-peptidylproline (omega=0). In terms of biological role, involved in protein export. Acts as a chaperone by maintaining the newly synthesized protein in an open conformation. Functions as a peptidyl-prolyl cis-trans isomerase. The chain is Trigger factor from Paramagnetospirillum magneticum (strain ATCC 700264 / AMB-1) (Magnetospirillum magneticum).